A 137-amino-acid polypeptide reads, in one-letter code: NADH dehydrogenase [ubiquinone] 1 beta subcomplex subunit 7 (137 aa).

A lipid anchor (N-myristoyl glycine) is attached at G2. In terms of domain architecture, CHCH spans 56–98 (RDYCAHHLIRLLKCKRDSFPNFLACKQERHDWDYCEHRDYVMR). A Cx9C motif 1 motif is present at residues 59–69 (CAHHLIRLLKC). 2 disulfides stabilise this stretch: C59/C90 and C69/C80. S73 is modified (phosphoserine). A Cx9C motif 2 motif is present at residues 80-90 (CKQERHDWDYC). Residues 113 to 137 (KRREKKAAELAKGQGPGEVDPKVAL) are disordered.

The protein belongs to the complex I NDUFB7 subunit family. As to quaternary structure, complex I is composed of 45 different subunits.

The protein localises to the mitochondrion inner membrane. It localises to the mitochondrion intermembrane space. Its function is as follows. Accessory subunit of the mitochondrial membrane respiratory chain NADH dehydrogenase (Complex I), that is believed not to be involved in catalysis. Complex I functions in the transfer of electrons from NADH to the respiratory chain. The immediate electron acceptor for the enzyme is believed to be ubiquinone. The sequence is that of NADH dehydrogenase [ubiquinone] 1 beta subcomplex subunit 7 (NDUFB7) from Homo sapiens (Human).